The following is a 428-amino-acid chain: Histidinol dehydrogenase (428 aa).

Residues Tyr-127, Gln-185, and Asn-208 each coordinate NAD(+). Positions 234, 256, and 259 each coordinate substrate. Zn(2+)-binding residues include Gln-256 and His-259. Active-site proton acceptor residues include Glu-323 and His-324. Positions 324, 357, 411, and 416 each coordinate substrate. A Zn(2+)-binding site is contributed by Asp-357. A Zn(2+)-binding site is contributed by His-416.

This sequence belongs to the histidinol dehydrogenase family. Requires Zn(2+) as cofactor.

The enzyme catalyses L-histidinol + 2 NAD(+) + H2O = L-histidine + 2 NADH + 3 H(+). It participates in amino-acid biosynthesis; L-histidine biosynthesis; L-histidine from 5-phospho-alpha-D-ribose 1-diphosphate: step 9/9. Functionally, catalyzes the sequential NAD-dependent oxidations of L-histidinol to L-histidinaldehyde and then to L-histidine. The protein is Histidinol dehydrogenase of Mannheimia succiniciproducens (strain KCTC 0769BP / MBEL55E).